Here is a 461-residue protein sequence, read N- to C-terminus: D-phenylhydantoinase (461 aa).

His-59, His-61, and Lys-151 together coordinate a divalent metal cation. Lys-151 is subject to N6-carboxylysine. Tyr-156 lines the substrate pocket. Residues His-182 and His-239 each contribute to the a divalent metal cation site. Ser-286 provides a ligand contact to substrate. Asp-313 contributes to the a divalent metal cation binding site. Asn-335 lines the substrate pocket.

The protein belongs to the metallo-dependent hydrolases superfamily. Hydantoinase/dihydropyrimidinase family. Homotetramer. A divalent metal cation is required as a cofactor. Carboxylation allows a single lysine to coordinate two divalent metal cations.

The catalysed reaction is D-5-phenylhydantoin + H2O = N-carbamoyl-D-phenylglycine + H(+). Catalyzes the stereospecific hydrolysis of the cyclic amide bond of D-hydantoin derivatives with an aromatic side chains at the 5'-position. Has no activity on dihydropyrimidines. The physiological function is unknown. The protein is D-phenylhydantoinase of Escherichia coli O9:H4 (strain HS).